The primary structure comprises 200 residues: Recombination protein RecR (200 aa).

Residues cysteine 57–cysteine 72 form a C4-type zinc finger. The Toprim domain occupies glycine 81–proline 176.

This sequence belongs to the RecR family.

May play a role in DNA repair. It seems to be involved in an RecBC-independent recombinational process of DNA repair. It may act with RecF and RecO. The chain is Recombination protein RecR from Tolumonas auensis (strain DSM 9187 / NBRC 110442 / TA 4).